The following is a 172-amino-acid chain: Envelope protein UL45 (172 aa).

The Intravirion segment spans residues 1–27; it reads MPLRASEHAYRPLGPGTPPMRARLPAA. Residues 28 to 48 form a helical; Signal-anchor for type II membrane protein membrane-spanning segment; that stretch reads AWVGVGTIIGGVVIIAALVLV. Residues 49 to 172 lie on the Virion surface side of the membrane; sequence PSRASWALSP…TSTRNALGLP (124 aa).

This sequence belongs to the herpesviridae HHV-1 UL45 family.

It is found in the virion membrane. Its function is as follows. Important virulence factor of HSV neurotropism. Seems to be required for glycoprotein B-induced fusion. Dispensable for growth in vitro. The sequence is that of Envelope protein UL45 from Human herpesvirus 1 (strain KOS) (HHV-1).